The sequence spans 266 residues: Derlin-1 (266 aa).

Topologically, residues 1 to 20 are cytoplasmic; it reads MSSPGEFYNSLPPITKAYGT. A helical transmembrane segment spans residues 21–41; the sequence is LCFFTTVATQLGLVAPVHIAL. At 42-55 the chain is on the lumenal side; it reads IPELVLKQFQIWRL. Residues 56–76 form a helical membrane-spanning segment; sequence ITNLFFLGGFSINFGIRLLMI. Residues 77 to 94 lie on the Cytoplasmic side of the membrane; the sequence is ARYGVQLEKGPFERRTAD. The chain crosses the membrane as a helical span at residues 95–115; it reads FLWMMIFGSFTLLVLSVIPFF. The Lumenal portion of the chain corresponds to 116–156; the sequence is WTPFLGVSLVFMLLYLWSREFPNANISLYGLVTLKAFYLPW. The helical transmembrane segment at 157 to 177 threads the bilayer; it reads AMLALDVIFGSPIMPDLLGII. The Cytoplasmic segment spans residues 178–266; the sequence is AGHLYYFLTV…FRGRSYRLTD (89 aa). Residues 235-266 are disordered; sequence GGVGGGGAYSSARAPPESSNTAFRGRSYRLTD.

Belongs to the derlin family.

Its subcellular location is the endoplasmic reticulum membrane. Its function is as follows. May be involved in the degradation process of specific misfolded endoplasmic reticulum (ER) luminal proteins. The polypeptide is Derlin-1 (DER1) (Arabidopsis thaliana (Mouse-ear cress)).